A 502-amino-acid chain; its full sequence is Probable ADP-dependent glucokinase (502 aa).

Residues 1–32 form the signal peptide; it reads MFSETFVPSIFSYKHRLLHLSVLFFIVPYWYS. The ADPK domain occupies 44–497; the sequence is SVETAMFLSW…LLYSQFYRLN (454 aa). N-linked (GlcNAc...) asparagine glycans are attached at residues N89 and N190. Mg(2+)-binding residues include E290, E320, and D481. Catalysis depends on D481, which acts as the Proton acceptor.

The protein belongs to the ADP-dependent glucokinase family. In terms of assembly, monomer. Mg(2+) serves as cofactor.

The protein localises to the secreted. It carries out the reaction D-glucose + ADP = D-glucose 6-phosphate + AMP + H(+). Its pathway is carbohydrate degradation; glycolysis. Catalyzes the phosphorylation of D-glucose to D-glucose 6-phosphate using ADP as the phosphate donor. GDP and CDP can replace ADP, but with reduced efficiency. The polypeptide is Probable ADP-dependent glucokinase (Caenorhabditis elegans).